The chain runs to 61 residues: ILNSPDRACNLAKQAFDEAISELDSLGEESYKDSTLIMQLLXDNLTLWTSDTNEDGGDEIK.

It belongs to the 14-3-3 family.

This is 14-3-3-like protein from Zea mays (Maize).